The sequence spans 431 residues: Serine--tRNA ligase (431 aa).

237 to 239 provides a ligand contact to L-serine; it reads TAE. Position 268–270 (268–270) interacts with ATP; that stretch reads RSE. L-serine is bound at residue glutamate 291. 355–358 is a binding site for ATP; the sequence is EISS. Serine 390 is a binding site for L-serine.

This sequence belongs to the class-II aminoacyl-tRNA synthetase family. Type-1 seryl-tRNA synthetase subfamily. Homodimer. The tRNA molecule binds across the dimer.

The protein resides in the cytoplasm. It carries out the reaction tRNA(Ser) + L-serine + ATP = L-seryl-tRNA(Ser) + AMP + diphosphate + H(+). It catalyses the reaction tRNA(Sec) + L-serine + ATP = L-seryl-tRNA(Sec) + AMP + diphosphate + H(+). It participates in aminoacyl-tRNA biosynthesis; selenocysteinyl-tRNA(Sec) biosynthesis; L-seryl-tRNA(Sec) from L-serine and tRNA(Sec): step 1/1. Its function is as follows. Catalyzes the attachment of serine to tRNA(Ser). Is also able to aminoacylate tRNA(Sec) with serine, to form the misacylated tRNA L-seryl-tRNA(Sec), which will be further converted into selenocysteinyl-tRNA(Sec). The chain is Serine--tRNA ligase from Neisseria meningitidis serogroup B (strain ATCC BAA-335 / MC58).